A 160-amino-acid chain; its full sequence is Serine-protein kinase RsbW (160 aa).

Belongs to the anti-sigma-factor family.

It carries out the reaction L-seryl-[protein] + ATP = O-phospho-L-seryl-[protein] + ADP + H(+). The catalysed reaction is L-threonyl-[protein] + ATP = O-phospho-L-threonyl-[protein] + ADP + H(+). Functionally, negative regulator of sigma-B activity. Phosphorylates and inactivates its specific antagonist protein, RsbV. Upon phosphorylation of RsbV, RsbW is released and binds to sigma-B, thereby blocking its ability to form an RNA polymerase holoenzyme (E-sigma-B). This chain is Serine-protein kinase RsbW, found in Bacillus mycoides (strain KBAB4) (Bacillus weihenstephanensis).